The primary structure comprises 337 residues: Phosphatidylglycerophosphate phosphatase PTPMT1 (337 aa).

The segment at 1–20 is disordered; sequence MYIKELTETDEEKRERSVED. The substrate site is built by Y55 and D133. Residues 73 to 220 enclose the Tyrosine-protein phosphatase domain; sequence WWDRVAEFIL…VVEYYHVKVL (148 aa). Residue C164 is the Phosphocysteine intermediate of the active site. A Glucan phosphatase signature motif CXAGXGR motif is present at residues 164 to 170; the sequence is CKAGRGR. 165–170 lines the substrate pocket; it reads KAGRGR.

The protein belongs to the protein-tyrosine phosphatase family. Non-receptor class dual specificity subfamily. Expressed in stems, roots, flowers, mature seeds and leaves.

The catalysed reaction is O-phospho-L-seryl-[protein] + H2O = L-seryl-[protein] + phosphate. It carries out the reaction O-phospho-L-threonyl-[protein] + H2O = L-threonyl-[protein] + phosphate. It catalyses the reaction O-phospho-L-tyrosyl-[protein] + H2O = L-tyrosyl-[protein] + phosphate. The enzyme catalyses a 1,2-diacyl-sn-glycero-3-phospho-(1'-sn-glycero-3'-phosphate) + H2O = a 1,2-diacyl-sn-glycero-3-phospho-(1'-sn-glycerol) + phosphate. It participates in phospholipid metabolism; phosphatidylglycerol biosynthesis; phosphatidylglycerol from CDP-diacylglycerol: step 2/2. Exhibits phosphatidylglycerophosphate phosphatase activity. Involved in root growth and columella cells organization. May possess protein phosphatase activity. In Arabidopsis thaliana (Mouse-ear cress), this protein is Phosphatidylglycerophosphate phosphatase PTPMT1.